A 601-amino-acid chain; its full sequence is Glutathione-regulated potassium-efflux system protein KefB (601 aa).

The next 13 helical transmembrane spans lie at 4–24 (ADLL…VPLA), 29–49 (IGAV…GLGF), 55–75 (EILH…GLEL), 87–107 (IFGV…GLLM), 111–131 (FLWQ…TAMA), 152–172 (VLLF…LLAG), 177–197 (HFDW…LIGG), 207–227 (FIAA…LVLS), 230–250 (LFMD…GVLL), 262–282 (AIDP…GMSL), 284–304 (LGVL…LVVI), 324–344 (MQFA…FSTA), and 356–376 (ALLL…MKGI). Residues 400–519 (KPQVIVVGFG…AGVTQFSRET (120 aa)) enclose the RCK N-terminal domain.

This sequence belongs to the monovalent cation:proton antiporter 2 (CPA2) transporter (TC 2.A.37) family. KefB subfamily. In terms of assembly, interacts with the regulatory subunit KefG.

It localises to the cell inner membrane. Pore-forming subunit of a potassium efflux system that confers protection against electrophiles. Catalyzes K(+)/H(+) antiport. The chain is Glutathione-regulated potassium-efflux system protein KefB from Salmonella heidelberg (strain SL476).